The primary structure comprises 337 residues: Phosphate acyltransferase (337 aa).

It belongs to the PlsX family. In terms of assembly, homodimer. Probably interacts with PlsY.

It localises to the cytoplasm. The enzyme catalyses a fatty acyl-[ACP] + phosphate = an acyl phosphate + holo-[ACP]. The protein operates within lipid metabolism; phospholipid metabolism. In terms of biological role, catalyzes the reversible formation of acyl-phosphate (acyl-PO(4)) from acyl-[acyl-carrier-protein] (acyl-ACP). This enzyme utilizes acyl-ACP as fatty acyl donor, but not acyl-CoA. This Aquifex aeolicus (strain VF5) protein is Phosphate acyltransferase.